The sequence spans 264 residues: U1 snRNP-associated protein usp106 (264 aa).

Residues 83–126 (DYLEDLERHVDDCNKRIDIAEARREKTKEEEERIDELMRDIIHT) are a coiled coil. Positions 233–258 (EDREKSRDKKDGEKQRDNLASFEDKI) are enriched in basic and acidic residues. Residues 233–264 (EDREKSRDKKDGEKQRDNLASFEDKISTSFVA) form a disordered region.

The protein belongs to the Luc7 family. In terms of assembly, component of the U1 snRNP particle, a subcomplex of the spliceosome.

The protein localises to the cytoplasm. It is found in the nucleus. In terms of biological role, component of the U1 snRNP particle, which recognizes and binds the 5'-splice site of pre-mRNA. Together with other non-snRNP factors, U1 snRNP forms the spliceosomal commitment complex, that targets pre-mRNA to the splicing pathway. The sequence is that of U1 snRNP-associated protein usp106 (usp106) from Schizosaccharomyces pombe (strain 972 / ATCC 24843) (Fission yeast).